The primary structure comprises 96 residues: uncharacterized protein (96 aa).

The protein resides in the host cytoplasm. This is an uncharacterized protein from Escherichia phage Mu (Bacteriophage Mu).